Here is a 277-residue protein sequence, read N- to C-terminus: 2-dehydro-3-deoxyphosphooctonate aldolase (277 aa).

This sequence belongs to the KdsA family.

The protein localises to the cytoplasm. It carries out the reaction D-arabinose 5-phosphate + phosphoenolpyruvate + H2O = 3-deoxy-alpha-D-manno-2-octulosonate-8-phosphate + phosphate. It functions in the pathway carbohydrate biosynthesis; 3-deoxy-D-manno-octulosonate biosynthesis; 3-deoxy-D-manno-octulosonate from D-ribulose 5-phosphate: step 2/3. It participates in bacterial outer membrane biogenesis; lipopolysaccharide biosynthesis. This Mesorhizobium japonicum (strain LMG 29417 / CECT 9101 / MAFF 303099) (Mesorhizobium loti (strain MAFF 303099)) protein is 2-dehydro-3-deoxyphosphooctonate aldolase (kdsA).